A 436-amino-acid polypeptide reads, in one-letter code: D-amino acid dehydrogenase (436 aa).

FAD is bound at residue 3–17 (IVVLGAGVVGVTSAY).

This sequence belongs to the DadA oxidoreductase family. It depends on FAD as a cofactor.

It carries out the reaction a D-alpha-amino acid + A + H2O = a 2-oxocarboxylate + AH2 + NH4(+). Its pathway is amino-acid degradation; D-alanine degradation; NH(3) and pyruvate from D-alanine: step 1/1. Functionally, oxidative deamination of D-amino acids. This Cereibacter sphaeroides (strain ATCC 17023 / DSM 158 / JCM 6121 / CCUG 31486 / LMG 2827 / NBRC 12203 / NCIMB 8253 / ATH 2.4.1.) (Rhodobacter sphaeroides) protein is D-amino acid dehydrogenase.